We begin with the raw amino-acid sequence, 395 residues long: Zinc-regulated GTPase metalloprotein activator 1F (395 aa).

Positions 1–22 (MLPAVGSVDEEEDPAEEDCPEL) are disordered. Residues 8-20 (VDEEEDPAEEDCP) are compositionally biased toward acidic residues. Residues 17 to 24 (EDCPELVP) carry the psi-PxLVp motif motif. 49–56 (GYLGAGKT) contributes to the GTP binding site. Zn(2+) contacts are provided by Cys-107, Cys-109, and Cys-110. The CXCC motif motif lies at 107-110 (CLCC). GTP is bound by residues 110-114 (CSVKD) and 203-206 (NKTD). One can recognise a CobW C-terminal domain in the interval 274 to 377 (IVTITFDVPG…ILKQLFIATV (104 aa)).

The protein belongs to the SIMIBI class G3E GTPase family. ZNG1 subfamily.

The protein resides in the nucleus. The catalysed reaction is GTP + H2O = GDP + phosphate + H(+). Functionally, zinc chaperone that directly transfers zinc cofactor to target metalloproteins, thereby activating them. Catalyzes zinc insertion into the active site of methionine aminopeptidase METAP1, which function to cleave the initiator methionine from polypeptides during or after protein translation. Mechanistically, the N-terminal psi-PxLVp motif binds to the C6H2-type zinc finger of inactive form of METAP1. After formation of the docked complex, zinc is transferred from the CXCC motif in the GTPase domain of ZNG1F to the zinc binding site in the peptidase domain of METAP1 in a process requiring GTP hydrolysis. GTP/GDP exchange is required for release of active METAP1. This Homo sapiens (Human) protein is Zinc-regulated GTPase metalloprotein activator 1F.